We begin with the raw amino-acid sequence, 118 residues long: Large ribosomal subunit protein bL20 (118 aa).

This sequence belongs to the bacterial ribosomal protein bL20 family.

Binds directly to 23S ribosomal RNA and is necessary for the in vitro assembly process of the 50S ribosomal subunit. It is not involved in the protein synthesizing functions of that subunit. The chain is Large ribosomal subunit protein bL20 from Shewanella baltica (strain OS223).